The sequence spans 371 residues: Histidinol-phosphate aminotransferase 2 (371 aa).

Lys-232 carries the N6-(pyridoxal phosphate)lysine modification.

This sequence belongs to the class-II pyridoxal-phosphate-dependent aminotransferase family. Histidinol-phosphate aminotransferase subfamily. Homodimer. Pyridoxal 5'-phosphate serves as cofactor.

The enzyme catalyses L-histidinol phosphate + 2-oxoglutarate = 3-(imidazol-4-yl)-2-oxopropyl phosphate + L-glutamate. The protein operates within amino-acid biosynthesis; L-histidine biosynthesis; L-histidine from 5-phospho-alpha-D-ribose 1-diphosphate: step 7/9. The sequence is that of Histidinol-phosphate aminotransferase 2 from Methylococcus capsulatus (strain ATCC 33009 / NCIMB 11132 / Bath).